We begin with the raw amino-acid sequence, 273 residues long: UPF0173 metal-dependent hydrolase Bpro_4324 (273 aa).

The protein belongs to the UPF0173 family.

This is UPF0173 metal-dependent hydrolase Bpro_4324 from Polaromonas sp. (strain JS666 / ATCC BAA-500).